Reading from the N-terminus, the 842-residue chain is Squamosa promoter-binding-like protein 9 (842 aa).

A compositionally biased stretch (gly residues) spans 1–18 (MDAPGGGGGGGGGGGGVD). Disordered stretches follow at residues 1 to 22 (MDAP…AGEP), 59 to 97 (ALLP…RVRK), and 140 to 168 (RKKP…TPAE). The span at 69 to 85 (PAEAEAEAAGPASLPSS) shows a compositional bias: low complexity. Residues 146–162 (AGRGSGAAVGGSGGGAS) are compositionally biased toward gly residues. Residues 168–245 (EMKCQVPGCE…ERHNKRRRRK (78 aa)) form an SBP-type; atypical zinc finger. C171, C176, C193, C196, C212, C215, H219, and C231 together coordinate Zn(2+). The short motif at 228–244 (KRSCRRKLERHNKRRRR) is the Bipartite nuclear localization signal element. Residues 236 to 246 (ERHNKRRRRKP) are compositionally biased toward basic residues. A disordered region spans residues 236 to 256 (ERHNKRRRRKPDSKGILEKDI).

In terms of tissue distribution, ubiquitous.

The protein resides in the nucleus. In terms of biological role, trans-acting factor that binds specifically to the consensus nucleotide sequence 5'-TNCGTACAA-3'. The protein is Squamosa promoter-binding-like protein 9 (SPL9) of Oryza sativa subsp. japonica (Rice).